The following is a 306-amino-acid chain: tRNA pseudouridine synthase B (306 aa).

Asp38 acts as the Nucleophile in catalysis.

The protein belongs to the pseudouridine synthase TruB family. Type 1 subfamily.

The enzyme catalyses uridine(55) in tRNA = pseudouridine(55) in tRNA. Responsible for synthesis of pseudouridine from uracil-55 in the psi GC loop of transfer RNAs. This is tRNA pseudouridine synthase B from Syntrophotalea carbinolica (strain DSM 2380 / NBRC 103641 / GraBd1) (Pelobacter carbinolicus).